We begin with the raw amino-acid sequence, 724 residues long: Methionine--tRNA ligase (724 aa).

The short motif at 11–21 is the 'HIGH' region element; that stretch reads PYANGPIHAGH. Cysteine 143, cysteine 146, cysteine 156, and cysteine 159 together coordinate Zn(2+). The short motif at 344-348 is the 'KMSKS' region element; it reads KFSTS. An ATP-binding site is contributed by threonine 347. The tRNA-binding domain occupies 624–724; the sequence is EFSKIDLRIG…KEVKLGAKVR (101 aa).

The protein belongs to the class-I aminoacyl-tRNA synthetase family. MetG type 1 subfamily. In terms of assembly, homodimer. It depends on Zn(2+) as a cofactor.

Its subcellular location is the cytoplasm. It catalyses the reaction tRNA(Met) + L-methionine + ATP = L-methionyl-tRNA(Met) + AMP + diphosphate. In terms of biological role, is required not only for elongation of protein synthesis but also for the initiation of all mRNA translation through initiator tRNA(fMet) aminoacylation. The polypeptide is Methionine--tRNA ligase (Pyrococcus furiosus (strain ATCC 43587 / DSM 3638 / JCM 8422 / Vc1)).